A 1480-amino-acid chain; its full sequence is Cystic fibrosis transmembrane conductance regulator (1480 aa).

Residues 1–77 (MQRSPLEKAS…KLINALRRCF (77 aa)) are Cytoplasmic-facing. The chain crosses the membrane as a helical span at residues 78–98 (FWRFMFYGIFLYLGEVTKAVQ). Positions 81-365 (FMFYGIFLYL…WAVQTWYDSL (285 aa)) constitute an ABC transmembrane type-1 1 domain. Residues 99-122 (PLLLGRIIASYDPDNKEERSIAIY) are Extracellular-facing. A helical transmembrane segment spans residues 123–146 (LGIGLCLLFIVRTLLLHPAIFGLH). At 147–195 (HIGMQMRIAMFSLIYKKTLKLSSRVLDKISIGQLVSLLSNNLNKFDEGL) the chain is on the cytoplasmic side. Residues 196 to 216 (ALAHFVWIAPLQVALLMGLIW) traverse the membrane as a helical segment. Topologically, residues 217-222 (ELLQAS) are extracellular. The chain crosses the membrane as a helical span at residues 223–243 (AFCGLGFLIVLALFQAGLGRM). Residues 244 to 298 (MMKYRDQRAGKISERLVITSEMIENIQSVKAYCWEEAMEKMIENLRQTELKLTRK) are Cytoplasmic-facing. A helical transmembrane segment spans residues 299 to 319 (AAYVRYFNSSAFFFSGFFVVF). The Extracellular portion of the chain corresponds to 320–339 (LSVLPYALIKGIVLRKIFTT). A helical membrane pass occupies residues 340 to 358 (ISFCIVLRMAVTRQFPWAV). Topologically, residues 359–858 (QTWYDSLGAI…YLRYITVHKS (500 aa)) are cytoplasmic. ATP-binding positions include Trp-401, Ser-434, 458–465 (GSTGAGKT), and Gln-493. The 224-residue stretch at 423 to 646 (NGDDSLFFSN…RPDFSSKLMG (224 aa)) folds into the ABC transporter 1 domain. Residue Cys-524 is the site of S-palmitoyl cysteine attachment. Phosphoserine is present on residues Ser-549 and Ser-660. Residues 654-831 (SAERRNSILT…EEINEEDLKE (178 aa)) form a disordered R region region. Phosphoserine; by PKA is present on Ser-670. Ser-686 bears the Phosphoserine mark. Residue Lys-688 forms a Glycyl lysine isopeptide (Lys-Gly) (interchain with G-Cter in ubiquitin) linkage. Ser-700 and Ser-712 each carry phosphoserine. A Phosphothreonine modification is found at Thr-717. Phosphoserine occurs at positions 737, 753, 768, 790, 795, and 813. Residues 859 to 879 (LIFVLIWCLVIFLAEVAASLV) form a helical membrane-spanning segment. The 297-residue stretch at 859 to 1155 (LIFVLIWCLV…AVNSSIDVDS (297 aa)) folds into the ABC transmembrane type-1 2 domain. The Extracellular segment spans residues 880 to 918 (VLWLLGNTPLQDKGNSTHSRNNSYAVIITSTSSYYVFYI). N-linked (GlcNAc...) asparagine glycosylation is found at Asn-894 and Asn-900. Residues 919 to 939 (YVGVADTLLAMGFFRGLPLVH) traverse the membrane as a discontinuously helical segment. Residues 940 to 990 (TLITVSKILHHKMLHSVLQAPMSTLNTLKAGGILNRFSKDIAILDDLLPLT) lie on the Cytoplasmic side of the membrane. The helical transmembrane segment at 991–1011 (IFDFIQLLLIVIGAIAVVAVL) threads the bilayer. Topologically, residues 1012-1013 (QP) are extracellular. The helical transmembrane segment at 1014–1034 (YIFVATVPVIVAFIMLRAYFL) threads the bilayer. The Cytoplasmic segment spans residues 1035–1095 (QTSQQLKQLE…TANWFLYLST (61 aa)). A helical membrane pass occupies residues 1096 to 1116 (LRWFQMRIEMIFVMFFIAVTF). Topologically, residues 1117 to 1130 (ISILTTGEGEGRIG) are extracellular. Residues 1131–1151 (IILTLAMNIMSTLQWAVNSSI) form a helical membrane-spanning segment. Residues 1152–1480 (DVDSLMRSVS…TEEEVQDTRL (329 aa)) are Cytoplasmic-facing. The region spanning 1210 to 1443 (MTVKDLSAKY…RSLFRQAISP (234 aa)) is the ABC transporter 2 domain. ATP-binding positions include Tyr-1219 and 1244–1251 (GRTGSGKS). An interaction with GORASP2 region spans residues 1386–1480 (RTLKQAFADC…TEEEVQDTRL (95 aa)). Cys-1395 carries S-palmitoyl cysteine lipidation. Residues Ser-1444 and Ser-1456 each carry the phosphoserine modification. The tract at residues 1451–1480 (PHRNSSKGKSQPQIAALKEETEEEVQDTRL) is disordered. Residues 1470-1480 (ETEEEVQDTRL) show a composition bias toward acidic residues. Residues 1478–1480 (TRL) carry the PDZ-binding motif.

This sequence belongs to the ABC transporter superfamily. ABCC family. CFTR transporter (TC 3.A.1.202) subfamily. Monomer; does not require oligomerization for channel activity. May form oligomers in the membrane. Interacts with SLC26A3, SLC26A6 and NHERF1. Interacts with SHANK2. Interacts with MYO6. Interacts (via C-terminus) with GOPC (via PDZ domain); this promotes CFTR internalization and thereby decreases channel activity. Interacts with SLC4A7 through NHERF1. Found in a complex with MYO5B and RAB11A. Interacts with ANO1. Interacts with SLC26A8. Interacts with AHCYL1; the interaction increases CFTR activity. Interacts with CSE1L. The core-glycosylated form interacts with GORASP2 (via PDZ GRASP-type 1 domain) in respone to ER stress. Interacts with MARCHF2; the interaction leads to CFTR ubiqtuitination and degradation. Interacts with ADGRG2. Post-translationally, N-glycosylated. In terms of processing, phosphorylated; cAMP treatment promotes phosphorylation and activates the channel. Dephosphorylation decreases the ATPase activity (in vitro). Phosphorylation at PKA sites activates the channel. Phosphorylation at PKC sites enhances the response to phosphorylation by PKA. Phosphorylated by AMPK; this inhibits channel activity. Ubiquitinated, leading to its degradation in the lysosome. Deubiquitination by USP10 in early endosomes enhances its endocytic recycling to the cell membrane. Ubiquitinated by RNF185 during ER stress. Ubiquitinated by MARCHF2.

Its subcellular location is the apical cell membrane. The protein localises to the early endosome membrane. The protein resides in the cell membrane. It localises to the recycling endosome membrane. It is found in the endoplasmic reticulum membrane. Its subcellular location is the nucleus. It catalyses the reaction ATP + H2O + closed Cl(-) channel = ADP + phosphate + open Cl(-) channel.. It carries out the reaction chloride(in) = chloride(out). The enzyme catalyses hydrogencarbonate(in) = hydrogencarbonate(out). The catalysed reaction is ATP + H2O = ADP + phosphate + H(+). Its function is as follows. Epithelial ion channel that plays an important role in the regulation of epithelial ion and water transport and fluid homeostasis. Mediates the transport of chloride ions across the cell membrane. Possesses an intrinsic ATPase activity and utilizes ATP to gate its channel; the passive flow of anions through the channel is gated by cycles of ATP binding and hydrolysis by the ATP-binding domains. The ion channel is also permeable to HCO(3)(-); selectivity depends on the extracellular chloride concentration. Exerts its function also by modulating the activity of other ion channels and transporters. Contributes to the regulation of the pH and the ion content of the epithelial fluid layer. Modulates the activity of the epithelial sodium channel (ENaC) complex, in part by regulating the cell surface expression of the ENaC complex. May regulate bicarbonate secretion and salvage in epithelial cells by regulating the transporter SLC4A7. Can inhibit the chloride channel activity of ANO1. Plays a role in the chloride and bicarbonate homeostasis during sperm epididymal maturation and capacitation. The chain is Cystic fibrosis transmembrane conductance regulator from Nomascus leucogenys (Northern white-cheeked gibbon).